Here is a 151-residue protein sequence, read N- to C-terminus: Large ribosomal subunit protein bL9 (151 aa).

This sequence belongs to the bacterial ribosomal protein bL9 family.

Binds to the 23S rRNA. This chain is Large ribosomal subunit protein bL9, found in Lactobacillus delbrueckii subsp. bulgaricus (strain ATCC 11842 / DSM 20081 / BCRC 10696 / JCM 1002 / NBRC 13953 / NCIMB 11778 / NCTC 12712 / WDCM 00102 / Lb 14).